A 329-amino-acid chain; its full sequence is Phenylalanine--tRNA ligase alpha subunit (329 aa).

Glu246 lines the Mg(2+) pocket.

It belongs to the class-II aminoacyl-tRNA synthetase family. Phe-tRNA synthetase alpha subunit type 1 subfamily. As to quaternary structure, tetramer of two alpha and two beta subunits. It depends on Mg(2+) as a cofactor.

The protein localises to the cytoplasm. The catalysed reaction is tRNA(Phe) + L-phenylalanine + ATP = L-phenylalanyl-tRNA(Phe) + AMP + diphosphate + H(+). The protein is Phenylalanine--tRNA ligase alpha subunit of Helicobacter hepaticus (strain ATCC 51449 / 3B1).